Consider the following 316-residue polypeptide: Pantothenate kinase (316 aa).

95–102 (GSVAVGKS) serves as a coordination point for ATP.

Belongs to the prokaryotic pantothenate kinase family.

The protein resides in the cytoplasm. It catalyses the reaction (R)-pantothenate + ATP = (R)-4'-phosphopantothenate + ADP + H(+). The protein operates within cofactor biosynthesis; coenzyme A biosynthesis; CoA from (R)-pantothenate: step 1/5. The sequence is that of Pantothenate kinase from Shewanella sp. (strain ANA-3).